We begin with the raw amino-acid sequence, 298 residues long: GTP cyclohydrolase FolE2 (298 aa).

It belongs to the GTP cyclohydrolase IV family.

The catalysed reaction is GTP + H2O = 7,8-dihydroneopterin 3'-triphosphate + formate + H(+). It participates in cofactor biosynthesis; 7,8-dihydroneopterin triphosphate biosynthesis; 7,8-dihydroneopterin triphosphate from GTP: step 1/1. Its function is as follows. Converts GTP to 7,8-dihydroneopterin triphosphate. In Pseudomonas aeruginosa (strain UCBPP-PA14), this protein is GTP cyclohydrolase FolE2.